The primary structure comprises 394 residues: Cell division protein FtsZ (394 aa).

Residues 21–25 (GGGGN), 108–110 (GTG), E139, R143, and D187 each bind GTP.

This sequence belongs to the FtsZ family. As to quaternary structure, homodimer. Polymerizes to form a dynamic ring structure in a strictly GTP-dependent manner. Interacts directly with several other division proteins.

It localises to the cytoplasm. In terms of biological role, essential cell division protein that forms a contractile ring structure (Z ring) at the future cell division site. The regulation of the ring assembly controls the timing and the location of cell division. One of the functions of the FtsZ ring is to recruit other cell division proteins to the septum to produce a new cell wall between the dividing cells. Binds GTP and shows GTPase activity. The polypeptide is Cell division protein FtsZ (Azotobacter vinelandii).